A 199-amino-acid polypeptide reads, in one-letter code: Glycerol-3-phosphate acyltransferase (199 aa).

5 helical membrane-spanning segments follow: residues 3–23, 55–75, 79–99, 113–133, and 155–175; these read IKIL…AYIV, VITL…ATFI, FSYS…TIFL, VFFA…GLAF, and YFLG…LLII.

The protein belongs to the PlsY family. As to quaternary structure, probably interacts with PlsX.

The protein localises to the cell inner membrane. The catalysed reaction is an acyl phosphate + sn-glycerol 3-phosphate = a 1-acyl-sn-glycero-3-phosphate + phosphate. It participates in lipid metabolism; phospholipid metabolism. In terms of biological role, catalyzes the transfer of an acyl group from acyl-phosphate (acyl-PO(4)) to glycerol-3-phosphate (G3P) to form lysophosphatidic acid (LPA). This enzyme utilizes acyl-phosphate as fatty acyl donor, but not acyl-CoA or acyl-ACP. The polypeptide is Glycerol-3-phosphate acyltransferase (Endomicrobium trichonymphae).